A 178-amino-acid chain; its full sequence is MSAPTKRENDRARINEQITVPEVRLIDVDGNQAGIVSTREALRAAEESGLDLVEISPTAKPPVCRIMDYGKFLFELSKKQAEARKKQKQIQVKELKFRPTTEDGDYQVKLRNLIRFLNHGDKVKITLRFRGREMAHQELGMKILERLQADTADVAVVEQHAKREGRQLLMVLSPKKTK.

The protein belongs to the IF-3 family. In terms of assembly, monomer.

Its subcellular location is the cytoplasm. Its function is as follows. IF-3 binds to the 30S ribosomal subunit and shifts the equilibrium between 70S ribosomes and their 50S and 30S subunits in favor of the free subunits, thus enhancing the availability of 30S subunits on which protein synthesis initiation begins. The protein is Translation initiation factor IF-3 of Legionella pneumophila (strain Paris).